Consider the following 282-residue polypeptide: DNA-directed RNA polymerase III subunit RPC5 (282 aa).

The disordered stretch occupies residues 1 to 70; the sequence is MSIDNKLFVT…TGEEEEDDPV (70 aa). Composition is skewed to acidic residues over residues 10 to 35 and 60 to 70; these read TEED…DMIA and DTGEEEEDDPV. A Phosphothreonine modification is found at Thr-61.

In terms of assembly, component of the RNA polymerase III (Pol III) complex consisting of 17 subunits. Interacts with RPC53/RPC4. RPC53/RPC4, RPC37/RPC5 and RPC11/RPC10 probably form a Pol III subcomplex.

It localises to the nucleus. Functionally, DNA-dependent RNA polymerase catalyzes the transcription of DNA into RNA using the four ribonucleoside triphosphates as substrates. Specific peripheric component of RNA polymerase III which synthesizes small RNAs, such as 5S rRNA and tRNAs. The RPC53/RPC4-RPC37/RPC5 subcomplex is required for terminator recognition and reinitiation. This chain is DNA-directed RNA polymerase III subunit RPC5 (RPC37), found in Saccharomyces cerevisiae (strain ATCC 204508 / S288c) (Baker's yeast).